Here is a 132-residue protein sequence, read N- to C-terminus: ATP synthase epsilon chain, cyanelle (132 aa).

It belongs to the ATPase epsilon chain family. In terms of assembly, F-type ATPases have 2 components, CF(1) - the catalytic core - and CF(0) - the membrane proton channel. CF(1) has five subunits: alpha(3), beta(3), gamma(1), delta(1), epsilon(1). CF(0) has three main subunits: a, b and c.

The protein localises to the plastid. The protein resides in the cyanelle thylakoid membrane. Functionally, produces ATP from ADP in the presence of a proton gradient across the membrane. This is ATP synthase epsilon chain, cyanelle from Cyanophora paradoxa.